We begin with the raw amino-acid sequence, 332 residues long: Ribosomal RNA small subunit methyltransferase C (332 aa).

It belongs to the methyltransferase superfamily. RsmC family. In terms of assembly, monomer.

The protein resides in the cytoplasm. The catalysed reaction is guanosine(1207) in 16S rRNA + S-adenosyl-L-methionine = N(2)-methylguanosine(1207) in 16S rRNA + S-adenosyl-L-homocysteine + H(+). Functionally, specifically methylates the guanine in position 1207 of 16S rRNA in the 30S particle. This Pseudomonas syringae pv. tomato (strain ATCC BAA-871 / DC3000) protein is Ribosomal RNA small subunit methyltransferase C.